The primary structure comprises 105 residues: UPF0148 protein PH0795 (105 aa).

It belongs to the UPF0148 family.

This is UPF0148 protein PH0795 from Pyrococcus horikoshii (strain ATCC 700860 / DSM 12428 / JCM 9974 / NBRC 100139 / OT-3).